A 401-amino-acid chain; its full sequence is Exodeoxyribonuclease 7 large subunit (401 aa).

The protein belongs to the XseA family. Heterooligomer composed of large and small subunits.

The protein resides in the cytoplasm. It carries out the reaction Exonucleolytic cleavage in either 5'- to 3'- or 3'- to 5'-direction to yield nucleoside 5'-phosphates.. In terms of biological role, bidirectionally degrades single-stranded DNA into large acid-insoluble oligonucleotides, which are then degraded further into small acid-soluble oligonucleotides. The sequence is that of Exodeoxyribonuclease 7 large subunit from Thermoanaerobacter sp. (strain X514).